The sequence spans 430 residues: Tol-Pal system protein TolB (430 aa).

A signal peptide spans 1–21; sequence MKQAFRVALGFLVLWASVLHA.

The protein belongs to the TolB family. The Tol-Pal system is composed of five core proteins: the inner membrane proteins TolA, TolQ and TolR, the periplasmic protein TolB and the outer membrane protein Pal. They form a network linking the inner and outer membranes and the peptidoglycan layer.

Its subcellular location is the periplasm. Part of the Tol-Pal system, which plays a role in outer membrane invagination during cell division and is important for maintaining outer membrane integrity. TolB occupies a key intermediary position in the Tol-Pal system because it communicates directly with both membrane-embedded components, Pal in the outer membrane and TolA in the inner membrane. This Yersinia enterocolitica serotype O:8 / biotype 1B (strain NCTC 13174 / 8081) protein is Tol-Pal system protein TolB.